We begin with the raw amino-acid sequence, 249 residues long: uncharacterized protein (249 aa).

The signal sequence occupies residues 1-36 (MAKSPARRCTAKVRRVLSRSVLILCWSLLGAAPAHA). Residues 227–249 (ARQPPGRWVCPSSAGGPIGWHRQ) form a disordered region.

This is an uncharacterized protein from Mycobacterium tuberculosis (strain CDC 1551 / Oshkosh).